The sequence spans 99 residues: Small ribosomal subunit protein eS24 (99 aa).

Belongs to the eukaryotic ribosomal protein eS24 family.

The polypeptide is Small ribosomal subunit protein eS24 (rps2e) (Thermoplasma volcanium (strain ATCC 51530 / DSM 4299 / JCM 9571 / NBRC 15438 / GSS1)).